Consider the following 139-residue polypeptide: Thyrotropin subunit beta (139 aa).

A signal peptide spans 1 to 20 (MELSVAMCGLLCLLFSQAVP). Cystine bridges form between Cys22/Cys72, Cys36/Cys87, Cys39/Cys127, Cys47/Cys103, Cys51/Cys105, and Cys108/Cys115. Asn43 is a glycosylation site (N-linked (GlcNAc...) asparagine).

Belongs to the glycoprotein hormones subunit beta family. In terms of assembly, heterodimer of a common alpha chain and a unique beta chain which confers biological specificity to thyrotropin, lutropin, follitropin and gonadotropin.

The protein resides in the secreted. In terms of biological role, indispensable for the control of thyroid structure and metabolism. May play some role in the biological processes of the immature fishes. This Salmo salar (Atlantic salmon) protein is Thyrotropin subunit beta (tshb).